The sequence spans 172 residues: Adenine phosphoribosyltransferase (172 aa).

This sequence belongs to the purine/pyrimidine phosphoribosyltransferase family. In terms of assembly, homodimer.

It localises to the cytoplasm. The catalysed reaction is AMP + diphosphate = 5-phospho-alpha-D-ribose 1-diphosphate + adenine. Its pathway is purine metabolism; AMP biosynthesis via salvage pathway; AMP from adenine: step 1/1. Functionally, catalyzes a salvage reaction resulting in the formation of AMP, that is energically less costly than de novo synthesis. This chain is Adenine phosphoribosyltransferase, found in Ligilactobacillus salivarius (strain UCC118) (Lactobacillus salivarius).